The primary structure comprises 427 residues: Tuberculostearic acid methyltransferase UfaA1 (427 aa).

The protein belongs to the CFA/CMAS family.

The protein operates within lipid metabolism; fatty acid biosynthesis. Its activity is regulated as follows. Inhibited by S-adenosyl-L-homocysteine. Its function is as follows. Involved in the biosynthesis of the tuberculostearic acid (10-methylstearic-acid or TSA), a constituent lipid of the mycobacterial cell wall. Catalyzes the transfer of the methyl group from S-adenosyl-L-methionine (SAM) to the double bond of oleic acid in phosphatidylethanolamine or phosphatidylcholine to produce TSA. The sequence is that of Tuberculostearic acid methyltransferase UfaA1 from Mycobacterium tuberculosis (strain ATCC 25618 / H37Rv).